The primary structure comprises 376 residues: MKILVDENMPFVEPLFGDLGEIIPVNGRTLTVAQVRDADVLLVRSVTKVNAELLSDNHQLKFVGSATIGTDHVDLAYLGERNIPFSNAPGCNATAVGEFAFIAMLELAQRFDSPLKGKVVGIVGAGNTGTATAKCLQAYGIKVLLNDPIKEKQGDPRSFVSLETIMAQADIISLHVPITRTGEHKTKHLLDEARLTALKPNTWLVNCCRGDVIDNKALVRVKRQRDDLRLVLDVWEGEPTPMPELVPLAEFATPHIAGYSLEGKARGTFMLYQKLCQLLNIAADKSLLDLLPSFNIKAVELATAPDEKALLQLARFVYDLRDDDNMFRNIFLNENGFDTMRKNHRHRREFSALALAYDRQLEVDWLSNLGFSGVGQ.

Residues Ser-45 and Thr-67 each coordinate substrate. Asp-147 serves as a coordination point for NAD(+). Arg-209 is a catalytic residue. Asp-233 serves as a coordination point for NAD(+). Glu-238 is an active-site residue. Residue His-255 is the Proton donor of the active site. Residue Gly-258 coordinates NAD(+). Substrate is bound at residue Tyr-259.

It belongs to the D-isomer specific 2-hydroxyacid dehydrogenase family. PdxB subfamily. In terms of assembly, homodimer.

It is found in the cytoplasm. The enzyme catalyses 4-phospho-D-erythronate + NAD(+) = (R)-3-hydroxy-2-oxo-4-phosphooxybutanoate + NADH + H(+). The protein operates within cofactor biosynthesis; pyridoxine 5'-phosphate biosynthesis; pyridoxine 5'-phosphate from D-erythrose 4-phosphate: step 2/5. In terms of biological role, catalyzes the oxidation of erythronate-4-phosphate to 3-hydroxy-2-oxo-4-phosphonooxybutanoate. In Shewanella sp. (strain W3-18-1), this protein is Erythronate-4-phosphate dehydrogenase.